Consider the following 261-residue polypeptide: Serine/arginine-rich splicing factor 12 (261 aa).

Residues 10 to 88 form the RRM domain; the sequence is TSLFIRNVAD…RQIEIQFAQG (79 aa). Residues 86-261 are disordered; that stretch reads AQGDRKTPGQ…SRSYRHKNSW (176 aa). Basic and acidic residues predominate over residues 88–109; sequence GDRKTPGQMKSKERHPCSPSDH. Composition is skewed to basic residues over residues 110–122 and 178–191; these read RRSR…RTRS and GRSR…RSKS. A compositionally biased stretch (low complexity) spans 192–209; the sequence is IGKSQSSSPQKQTSSGTK. Polar residues predominate over residues 230 to 239; that stretch reads GYTNSETKVQ. The span at 240–261 shows a compositional bias: basic residues; sequence TAKHSHFRSHSRSRSYRHKNSW.

The protein belongs to the splicing factor SR family. Expressed in testis.

Its subcellular location is the nucleus. Splicing factor that seems to antagonize SR proteins in pre-mRNA splicing regulation. The protein is Serine/arginine-rich splicing factor 12 (SRSF12) of Homo sapiens (Human).